Here is a 397-residue protein sequence, read N- to C-terminus: 1-carboxy-3-chloro-3,4-dihydroxycyclo hexa-1,5-diene dehydrogenase (397 aa).

It to P.putida PHT4.

This chain is 1-carboxy-3-chloro-3,4-dihydroxycyclo hexa-1,5-diene dehydrogenase (cbaC), found in Comamonas testosteroni (Pseudomonas testosteroni).